Reading from the N-terminus, the 151-residue chain is Nucleoside diphosphate kinase (151 aa).

K11, F59, R87, T93, R104, and N114 together coordinate ATP. The Pros-phosphohistidine intermediate role is filled by H117.

It belongs to the NDK family. As to quaternary structure, homotetramer. It depends on Mg(2+) as a cofactor.

Its subcellular location is the cytoplasm. It catalyses the reaction a 2'-deoxyribonucleoside 5'-diphosphate + ATP = a 2'-deoxyribonucleoside 5'-triphosphate + ADP. It carries out the reaction a ribonucleoside 5'-diphosphate + ATP = a ribonucleoside 5'-triphosphate + ADP. Functionally, major role in the synthesis of nucleoside triphosphates other than ATP. The ATP gamma phosphate is transferred to the NDP beta phosphate via a ping-pong mechanism, using a phosphorylated active-site intermediate. The sequence is that of Nucleoside diphosphate kinase from Prochlorococcus marinus (strain SARG / CCMP1375 / SS120).